The primary structure comprises 143 residues: Transcriptional regulator MraZ (143 aa).

SpoVT-AbrB domains are found at residues 5–47 (EYEH…TLEE) and 76–119 (AIEV…DRET).

This sequence belongs to the MraZ family. As to quaternary structure, forms oligomers.

It is found in the cytoplasm. The protein localises to the nucleoid. This chain is Transcriptional regulator MraZ, found in Staphylococcus haemolyticus (strain JCSC1435).